The primary structure comprises 431 residues: Protein SHQ1 homolog (431 aa).

It belongs to the SHQ1 family.

In terms of biological role, required for the quantitative accumulation of H/ACA ribonucleoproteins (RNPs). This chain is Protein SHQ1 homolog, found in Caenorhabditis elegans.